A 616-amino-acid polypeptide reads, in one-letter code: Polypeptide N-acetylgalactosaminyltransferase 3 (616 aa).

A helical; Signal-anchor for type II membrane protein membrane pass occupies residues 13–33 (FFHWKLWKFSIIVFVFLVFLF). Residues 182-291 (LPTTSIIIVF…YGWLEPLLAR (110 aa)) are catalytic subdomain A. Mn(2+) contacts are provided by Asp-275, His-277, and His-413. Positions 354 to 416 (PIRTPTFAGG…PCSVVGHVFR (63 aa)) are catalytic subdomain B. Asn-482 carries N-linked (GlcNAc...) asparagine glycosylation. The Ricin B-type lectin domain occupies 512 to 616 (NRMCLDVGEN…FQKWIFGQND (105 aa)). A disulfide bridge links Cys-515 with Cys-533. Asp-517, Glu-520, His-534, and Asn-539 together coordinate UDP-N-acetyl-alpha-D-galactosamine. A disulfide bond links Cys-588 and Cys-601.

Belongs to the glycosyltransferase 2 family. GalNAc-T subfamily. The cofactor is Mn(2+).

It is found in the golgi apparatus. Its subcellular location is the golgi stack membrane. The enzyme catalyses L-seryl-[protein] + UDP-N-acetyl-alpha-D-galactosamine = a 3-O-[N-acetyl-alpha-D-galactosaminyl]-L-seryl-[protein] + UDP + H(+). The catalysed reaction is L-threonyl-[protein] + UDP-N-acetyl-alpha-D-galactosamine = a 3-O-[N-acetyl-alpha-D-galactosaminyl]-L-threonyl-[protein] + UDP + H(+). Its pathway is protein modification; protein glycosylation. In terms of biological role, catalyzes the initial reaction in O-linked oligosaccharide biosynthesis, the transfer of an N-acetyl-D-galactosamine residue to a serine or threonine residue on the protein receptor. Glycosylates FGF23. This is Polypeptide N-acetylgalactosaminyltransferase 3 (GALNT3) from Taeniopygia guttata (Zebra finch).